The chain runs to 359 residues: Fructose-bisphosphate aldolase (359 aa).

Residue S50 participates in D-glyceraldehyde 3-phosphate binding. D83 functions as the Proton donor in the catalytic mechanism. 4 residues coordinate Zn(2+): H84, D105, E142, and H198. G199 provides a ligand contact to dihydroxyacetone phosphate. Residue H232 participates in Zn(2+) binding. Dihydroxyacetone phosphate is bound by residues 233-235 (GSS) and 275-278 (NIDT).

This sequence belongs to the class II fructose-bisphosphate aldolase family. Zn(2+) serves as cofactor.

The enzyme catalyses beta-D-fructose 1,6-bisphosphate = D-glyceraldehyde 3-phosphate + dihydroxyacetone phosphate. The protein operates within carbohydrate degradation; glycolysis; D-glyceraldehyde 3-phosphate and glycerone phosphate from D-glucose: step 4/4. Its function is as follows. Catalyzes the aldol condensation of dihydroxyacetone phosphate (DHAP or glycerone-phosphate) with glyceraldehyde 3-phosphate (G3P) to form fructose 1,6-bisphosphate (FBP) in gluconeogenesis and the reverse reaction in glycolysis. This Nostoc commune protein is Fructose-bisphosphate aldolase (fba).